The chain runs to 385 residues: Podocin (385 aa).

The segment covering 1–27 (MDSRARSSSREAHGRSSRSSSRDDKKA) has biased composition (basic and acidic residues). The segment at 1 to 64 (MDSRARSSSR…GEPRAPAATA (64 aa)) is disordered. Over 1-104 (MDSRARSSSR…IKPSGLGACE (104 aa)) the chain is Cytoplasmic. Cys103 carries the S-palmitoyl cysteine lipid modification. Residues 105–125 (WLLVLASLIFIIMTFPFSIWF) traverse the membrane as a helical segment. Residues 126 to 385 (CIKVVQEYER…NPKKKDSPML (260 aa)) are Extracellular-facing. Polar residues predominate over residues 357–370 (NRAQGSINYPSSSK). A disordered region spans residues 357–385 (NRAQGSINYPSSSKPVEPLNPKKKDSPML). Basic and acidic residues predominate over residues 376 to 385 (NPKKKDSPML).

Belongs to the band 7/mec-2 family. As to quaternary structure, interacts with nephrin/NPHS1, KIRRL1 and CD2AP. Interacts with DDN.

It localises to the membrane. Its function is as follows. Plays a role in the regulation of glomerular permeability, acting probably as a linker between the plasma membrane and the cytoskeleton. The sequence is that of Podocin (Nphs2) from Mus musculus (Mouse).